The chain runs to 255 residues: ETS-related transcription factor Elf-5 (255 aa).

The PNT domain occupies 33–119 (YPAFEHQTAC…FILQSIRSQG (87 aa)). Positions 163–244 (SHLWEFVRDL…VDRRLVYKFG (82 aa)) form a DNA-binding region, ETS.

Belongs to the ETS family.

It localises to the nucleus. Functionally, transcriptionally activator that may play a role in regulating the later stages of keratinocytes terminal differentiation. Binds to DNA sequences containing the consensus nucleotide core sequence GGA[AT]. The chain is ETS-related transcription factor Elf-5 (ELF5) from Bos taurus (Bovine).